Consider the following 241-residue polypeptide: Probable transcriptional regulatory protein RSc2190 (241 aa).

The protein belongs to the TACO1 family.

It localises to the cytoplasm. The chain is Probable transcriptional regulatory protein RSc2190 from Ralstonia nicotianae (strain ATCC BAA-1114 / GMI1000) (Ralstonia solanacearum).